A 1012-amino-acid polypeptide reads, in one-letter code: MQAGNNGGAKLKNDEFDNLYQKNINRRETETVIRRSIPVQRDLTGKILPNQVAYYEEIEREVTFGATHHILDKDNFDSYIYPTNFEVREYQFNIVQKSLYQNTLCAIPTGMGKTFIASTVMLNFFRWSKNGKIIFTAPTRPLVAQQIKACLGITGIPHDQAAILLDKSRKNREDIWTQKRVFFTTPQVIENDLKRGVLNPKDIICLVFDEAHRATGSYAYTNVVKFIDRFNSSYRILALTATPGTDIASVQEVVNNLNISNIEIRTEESMDIIRYMKKRYKEKIEIGLTTEIEMIIEQLGIAVKPVLQQAVELGIYDECHPSQINSFVAMQKSQQIIANPTIAEGIKWRNFFILQLLNHVGQMLKRIKIYGIRSFYGYFRNKFSEFTTKYNMGKSTNKIAASFYYHPILKILMKNCDVYTSNSSFIGHDKLQKIINELSDFFLNSRLDSRVIIFTELRESALEIVKTIDNMGSSSIRPHIFIGQARGKENFDDEGFIRKNKPKGRKKADRLKRLEEDKQKQLSKAKQKEQEKVERSSRRTGSSEEAQISGMNQKQQKEVISKFKNGDYNVLVCTSIGEEGLDIGEVDMIICFDTTGSPIKNIQRMGRTGRKRDGKILLLFSGNESRKFEKAMEDYYDLQRLIGQNFVEYKKSDRILPSNITPECRKEFIHISAENNELNNMEDSDEVIRYATQCMLGKVPKSKKSKAKAAKEPKGKSKTFFMPDNVETGIVSAIALVNKKKSNSNESETVIKTECFPNLDDIEKDMLASLSSPVKPEVDDYKDGTFQKTDRFEEKITGSNLKDMLMSFSKRDEESKVTSFSSDGNYVNEPFGNISLGEKLDINDDFASTPIVKADMNIGQYDRSLIENNSRGGVLFKNAFEKEEGLLKKSEKVYFRDHYSIDNTVVIEPIPNFKRYNKSCLINHNPQVENILNLFKGINENKTQITIEMNRSRCIARGIEKGSIQLTGSDFSLANVMVAQKNNEADIVWDTSKTNKNSHENLNELLDSDSDF.

Residues 94–261 (IVQKSLYQNT…EVVNNLNISN (168 aa)) enclose the Helicase ATP-binding domain. 107-114 (IPTGMGKT) is an ATP binding site. The short motif at 209-212 (DEAH) is the DEAH box element. The region spanning 430 to 654 (KLQKIINELS…NFVEYKKSDR (225 aa)) is the Helicase C-terminal domain. Residues 493–555 (DEGFIRKNKP…AQISGMNQKQ (63 aa)) form a disordered region. Positions 498-510 (RKNKPKGRKKADR) are enriched in basic residues. Positions 511 to 537 (LKRLEEDKQKQLSKAKQKEQEKVERSS) are enriched in basic and acidic residues.

This sequence belongs to the DEAD box helicase family. DEAH subfamily. FANCM sub-subfamily. As to quaternary structure, interacts with the MHF histone-fold complex to form the FANCM-MHF complex.

It is found in the nucleus. It carries out the reaction ATP + H2O = ADP + phosphate + H(+). Its function is as follows. ATP-dependent DNA helicase involved in DNA damage repair by homologous recombination and in genome maintenance. Capable of unwinding D-loops. Plays a role in limiting crossover recombinants during mitotic DNA double-strand break (DSB) repair. Component of a FANCM-MHF complex which promotes gene conversion at blocked replication forks, probably by reversal of the stalled fork. The protein is ATP-dependent DNA helicase MPH1 of Vanderwaltozyma polyspora (strain ATCC 22028 / DSM 70294 / BCRC 21397 / CBS 2163 / NBRC 10782 / NRRL Y-8283 / UCD 57-17) (Kluyveromyces polysporus).